Reading from the N-terminus, the 312-residue chain is Coproporphyrin III ferrochelatase (312 aa).

Fe-coproporphyrin III-binding positions include Tyr13, Arg30, 46-47, Ser54, and Tyr125; that span reads RY. 2 residues coordinate Fe(2+): His183 and Glu264.

This sequence belongs to the ferrochelatase family.

It is found in the cytoplasm. The catalysed reaction is Fe-coproporphyrin III + 2 H(+) = coproporphyrin III + Fe(2+). Its pathway is porphyrin-containing compound metabolism; protoheme biosynthesis. In terms of biological role, involved in coproporphyrin-dependent heme b biosynthesis. Catalyzes the insertion of ferrous iron into coproporphyrin III to form Fe-coproporphyrin III. In Bacillus pumilus (strain SAFR-032), this protein is Coproporphyrin III ferrochelatase.